The primary structure comprises 424 residues: ATP-sensitive inward rectifier potassium channel 8 (424 aa).

Residues 1 to 69 (MLARKSIIPE…IFTTLVDLKW (69 aa)) are Cytoplasmic-facing. Residue Ser6 is modified to Phosphoserine. Residues 70 to 94 (RHTLVIFTMSFLCSWLLFAIMWWLV) form a helical membrane-spanning segment. The Extracellular segment spans residues 95–126 (AFAHGDIYAYMEKGITEKSGLESAVCVTNVRS). Positions 127–138 (FTSAFLFSIEVQ) form an intramembrane region, helical; Pore-forming. The pore-forming intramembrane region spans 139–145 (VTIGFGG). Residues 140–145 (TIGFGG) carry the Selectivity filter motif. Residues 146-154 (RMMTEECPL) are Extracellular-facing. A helical transmembrane segment spans residues 155–176 (AITVLILQNIVGLIINAVMLGC). Residues 177 to 424 (IFMKTAQAHR…PEGNQCPSES (248 aa)) lie on the Cytoplasmic side of the membrane. A disordered region spans residues 374–424 (LSHQNSLRKRNSMRRNNSMRRSNSIRRNNSSLMVPKVQFMTPEGNQCPSES). The span at 387 to 404 (RRNNSMRRSNSIRRNNSS) shows a compositional bias: low complexity.

Belongs to the inward rectifier-type potassium channel (TC 1.A.2.1) family. KCNJ8 subfamily. As to quaternary structure, interacts with ABCC9. Widely expressed, including in pancreatic islets, pituitary, skeletal muscle and heart.

Its subcellular location is the membrane. The enzyme catalyses K(+)(in) = K(+)(out). Functionally, inward rectifier potassium channels are characterized by a greater tendency to allow potassium to flow into the cell rather than out of it. Their voltage dependence is regulated by the concentration of extracellular potassium; as external potassium is raised, the voltage range of the channel opening shifts to more positive voltages. The inward rectification is mainly due to the blockage of outward current by internal magnesium. This channel is activated by internal ATP and can be blocked by external barium. Can form a sulfonyllurea-sensitive but ATP-insensitive potassium channel with ABCC9. The polypeptide is ATP-sensitive inward rectifier potassium channel 8 (Kcnj8) (Rattus norvegicus (Rat)).